Consider the following 147-residue polypeptide: Hemoglobin subunit epsilon (147 aa).

The Globin domain occupies 3–147 (HFTAEEKVAI…VAIALGHKYH (145 aa)). Phosphoserine is present on residues S14 and S51. Heme b-binding residues include H64 and H93.

The protein belongs to the globin family. As to quaternary structure, heterotetramer of two alpha chains and two epsilon chains in early embryonic hemoglobin Gower-2; two zeta chains and two epsilon chains in early embryonic hemoglobin Gower-1. Red blood cells.

Its function is as follows. The epsilon chain is a beta-type chain of early mammalian embryonic hemoglobin. This is Hemoglobin subunit epsilon (HBE1) from Cebus kaapori (Ka'apor capuchin).